The following is a 408-amino-acid chain: Diguanylate cyclase DgcN (408 aa).

Residues 1–24 (MMDNDNSLNKRPTFKRALRNISMT) are Cytoplasmic-facing. Residues 25-45 (SIFITMMLIWLLLSVTSVLTL) traverse the membrane as a helical segment. Residues 46–52 (KQYAQKN) are Periplasmic-facing. A helical membrane pass occupies residues 53–73 (LALTAATMTYSLEAAVVFADG). At 74 to 112 (PAATETLAALGQQGQFSTAEVRDKQQNILASWHYTRKDP) the chain is on the cytoplasmic side. A helical transmembrane segment spans residues 113 to 133 (GDTFSNFISHWLFPAPIIQPI). Over 134–154 (RHNGETIGEVRLTARDSSISH) the chain is Periplasmic. A helical transmembrane segment spans residues 155-175 (FIWFSLAVLTGCILLASGIAI). Topologically, residues 176 to 408 (TLTRHLHNGL…KHQRAEKLVR (233 aa)) are cytoplasmic. One can recognise an HAMP domain in the interval 183-236 (NGLVEALKNITDVVHDVRSNRNFSRRVSEERIAEFHRFALDFNSLLDEMEEWQL). The region spanning 278–408 (KTSALLFLDG…KHQRAEKLVR (131 aa)) is the GGDEF domain. Asp286 is a binding site for Mg(2+). Residues Asn294, His299, and Asp303 each contribute to the substrate site. Asp329 is a binding site for Mg(2+). Asp329 functions as the Proton acceptor in the catalytic mechanism.

As to quaternary structure, homodimer. Interacts with the cell division proteins FtsZ and ZipA. Mg(2+) is required as a cofactor.

It localises to the cell inner membrane. It catalyses the reaction 2 GTP = 3',3'-c-di-GMP + 2 diphosphate. Its pathway is purine metabolism; 3',5'-cyclic di-GMP biosynthesis. Inhibited by YfiR, which prevents relocation to the midcell. A reductive stress signal is required to inactivate YfiR and turn on the DGC activity of DgcN. Functionally, bifunctional protein that catalyzes the synthesis of cyclic-di-GMP (c-di-GMP) in response to reductive stress and then dynamically relocates to the division site to arrest cell division in response to envelope stress. In the presence of high intracellular c-di-GMP levels, and in response to envelope stress, interacts with cell division proteins and halts cell division, without disassembling the Z ring, but by blocking its further progress toward cytokinesis. Part of a network that regulates cell motility by altering levels of c-di-GMP. The chain is Diguanylate cyclase DgcN from Escherichia coli (strain K12).